The primary structure comprises 146 residues: Superoxide dismutase [Mn] 2 (146 aa).

Residues histidine 42, aspartate 126, and histidine 130 each contribute to the Mn(2+) site.

This sequence belongs to the iron/manganese superoxide dismutase family. Requires Mn(2+) as cofactor.

The catalysed reaction is 2 superoxide + 2 H(+) = H2O2 + O2. Its function is as follows. Destroys superoxide anion radicals which are normally produced within the cells and which are toxic to biological systems. This chain is Superoxide dismutase [Mn] 2 (sod2), found in Haloferax mediterranei (Halobacterium mediterranei).